The primary structure comprises 284 residues: NADH-cytochrome b5 reductase 1 (284 aa).

Residues 8–28 (PLVIFSTLAAIILAAVAVYVV) form a helical membrane-spanning segment. In terms of domain architecture, FAD-binding FR-type spans 41–144 (DVFQKFPLIE…RGPKGFFTYT (104 aa)). FAD-binding positions include 124-139 (DSKS…GPKG) and 150-182 (HLGM…KISL).

The protein belongs to the flavoprotein pyridine nucleotide cytochrome reductase family. In terms of assembly, monomer. Component of the 2-(3-amino-3-carboxypropyl)histidine synthase complex composed of DPH1, DPH2, DPH3 and a NADH-dependent reductase, predominantly CBR1. FAD serves as cofactor.

It is found in the mitochondrion outer membrane. The catalysed reaction is 2 Fe(III)-[cytochrome b5] + NADH = 2 Fe(II)-[cytochrome b5] + NAD(+) + H(+). It catalyses the reaction 2 Fe(3+)-[Dph3] + NADH = 2 Fe(2+)-[Dph3] + NAD(+) + H(+). Its pathway is protein modification; peptidyl-diphthamide biosynthesis. In terms of biological role, NADH-dependent reductase for DPH3 and cytochrome b5. Required for the first step of diphthamide biosynthesis, a post-translational modification of histidine which occurs in elongation factor 2. DPH1 and DPH2 transfer a 3-amino-3-carboxypropyl (ACP) group from S-adenosyl-L-methionine (SAM) to a histidine residue, the reaction is assisted by a reduction system comprising DPH3 and a NADH-dependent reductase, predominantly CBR1. By reducing DPH3, also involved in the formation of the tRNA wobble base modification mcm5s 2U (5-methoxycarbonylmethyl-2-thiouridine), mediated by the elongator complex. The cytochrome b5/NADH cytochrome b5 reductase electron transfer system supports the catalytic activity of several sterol biosynthetic enzymes. This Meyerozyma guilliermondii (strain ATCC 6260 / CBS 566 / DSM 6381 / JCM 1539 / NBRC 10279 / NRRL Y-324) (Yeast) protein is NADH-cytochrome b5 reductase 1 (CBR1).